Consider the following 295-residue polypeptide: Sulfotransferase 1E1 (295 aa).

48–53 (KSGSTW) is a 3'-phosphoadenylyl sulfate binding site. Residue 106 to 108 (KTH) participates in substrate binding. His108 serves as the catalytic Proton acceptor. Residues Arg130 and Ser138 each contribute to the 3'-phosphoadenylyl sulfate site. Phosphoserine is present on Ser156. 3'-phosphoadenylyl sulfate is bound by residues Tyr193, 227 to 232 (TSFQEM), and 257 to 259 (RKG).

It belongs to the sulfotransferase 1 family. In terms of assembly, homodimer. As to expression, liver of young mature males and uterus.

The protein localises to the cytoplasm. It is found in the cytosol. The catalysed reaction is estrone + 3'-phosphoadenylyl sulfate = estrone 3-sulfate + adenosine 3',5'-bisphosphate + H(+). It catalyses the reaction (24S)-hydroxycholesterol + 3'-phosphoadenylyl sulfate = (24S)-hydroxycholesterol 3-sulfate + adenosine 3',5'-bisphosphate + H(+). It carries out the reaction 17beta-estradiol + 3'-phosphoadenylyl sulfate = 17beta-estradiol 3-sulfate + adenosine 3',5'-bisphosphate + H(+). The enzyme catalyses 3beta-hydroxyandrost-5-en-17-one + 3'-phosphoadenylyl sulfate = dehydroepiandrosterone 3-sulfate + adenosine 3',5'-bisphosphate + H(+). The catalysed reaction is 4-ethylphenol + 3'-phosphoadenylyl sulfate = 4-ethylphenyl sulfate + adenosine 3',5'-bisphosphate + H(+). Inhibited by estradiol. Its function is as follows. Sulfotransferase that utilizes 3'-phospho-5'-adenylyl sulfate (PAPS) as sulfonate donor to catalyze the sulfate conjugation of estradiol and estrone. Is a key enzyme in estrogen homeostasis, the sulfation of estrogens leads to their inactivation. Also sulfates dehydroepiandrosterone (DHEA), pregnenolone, (24S)-hydroxycholesterol and xenobiotic compounds like ethinylestradiol, equalenin, diethyl stilbesterol and 1-naphthol at significantly lower efficiency. Does not sulfonate cortisol, testosterone and dopamine. May play a role in gut microbiota-host metabolic interaction. O-sulfonates 4-ethylphenol (4-EP), a dietary tyrosine-derived metabolite produced by gut bacteria. The product 4-EPS crosses the blood-brain barrier and may negatively regulate oligodendrocyte maturation and myelination, affecting the functional connectivity of different brain regions associated with the limbic system. This Rattus norvegicus (Rat) protein is Sulfotransferase 1E1.